The following is a 234-amino-acid chain: Sugar fermentation stimulation protein A (234 aa).

Residues 201–220 (LLSEAQNKGVEVLAYKAELS) constitute a DNA-binding region (H-T-H motif).

Belongs to the SfsA family.

In terms of biological role, binds to DNA non-specifically. Could be a regulatory factor involved in maltose metabolism. The protein is Sugar fermentation stimulation protein A of Salmonella typhi.